A 178-amino-acid chain; its full sequence is Caveolin-1 (178 aa).

Position 2 is an N-acetylserine (serine 2). Serine 2 carries the post-translational modification Phosphoserine. A required for homooligomerization region spans residues 2–94 (SGGKYVDSEG…WKASFTTFTV (93 aa)). Residues 2–104 (SGGKYVDSEG…TKYWFYRLLS (103 aa)) lie on the Cytoplasmic side of the membrane. Lysine 5 is subject to N6-acetyllysine; alternate. Residue lysine 5 forms a Glycyl lysine isopeptide (Lys-Gly) (interchain with G-Cter in ubiquitin); alternate linkage. Position 6 is a phosphotyrosine (tyrosine 6). The residue at position 9 (serine 9) is a Phosphoserine. The residue at position 14 (tyrosine 14) is a Phosphotyrosine; by ABL1. Tyrosine 25 is modified (phosphotyrosine). Glycyl lysine isopeptide (Lys-Gly) (interchain with G-Cter in ubiquitin) cross-links involve residues lysine 26 and lysine 30. Serine 37 is subject to Phosphoserine. Residues lysine 39, lysine 47, and lysine 57 each participate in a glycyl lysine isopeptide (Lys-Gly) (interchain with G-Cter in ubiquitin) cross-link. Residues 82-94 (DGIWKASFTTFTV) form an interaction with CAVIN3 region. The segment at residues 105–125 (ALFGIPMALIWGIYFAILSFL) is an intramembrane region (helical). The Cytoplasmic portion of the chain corresponds to 126-178 (HIWAVVPCIKSFLIEIQCISRVYSIYVHTFCDPFFEAVGKIFSNIRINMQKET). Positions 131 to 142 (VPCIKSFLIEIQ) are interacts with SPRY1, SPRY2, SPRY3 and SPRY4. Residues cysteine 133, cysteine 143, and cysteine 156 are each lipidated (S-palmitoyl cysteine). The segment at 149 to 160 (SIYVHTFCDPFF) is interacts with SPRY1, SPRY2, and SPRY4. Residues 167 to 178 (FSNIRINMQKET) form an interacts with SPRY1, SPRY2, SPRY3 and SPRY4 region.

The protein belongs to the caveolin family. Homooligomer. Interacts with BMX, BTK, GLIPR2, NOSTRIN, SNAP25 and STX1A. Interacts with PACSIN2; this interaction induces membrane tubulation. Interacts (via the N-terminus) with DPP4; the interaction is direct. Interacts with SLC7A9. Interacts with CTNNB1, CDH1 and JUP. Interacts with TGFBR1. Interacts with CAVIN3 (via leucine-zipper domain) in a cholesterol-sensitive manner. Interacts with CAVIN1. Interacts with EHD2 in a cholesterol-dependent manner. Forms a ternary complex with UBXN6 and VCP; mediates CAV1 targeting to lysosomes for degradation. Interacts with ABCG1; this interaction regulates ABCG1-mediated cholesterol efflux. Interacts with NEU3; this interaction enhances NEU3 sialidase activity within caveola. Interacts (via C-terminus) with SPRY1, SPRY2 (via C-terminus), SPRY3, and SPRY4. Interacts with IGFBP5; this interaction allows trafficking of IGFBP5 from the plasma membrane to the nucleus. Post-translationally, phosphorylation of isoform Beta on serine residues is constitutive. Phosphorylated at Tyr-14 by ABL1 in response to oxidative stress. In terms of processing, ubiquitinated. Undergo monoubiquitination and multi- and/or polyubiquitination. Monoubiquitination of N-terminal lysines promotes integration in a ternary complex with UBXN6 and VCP which promotes oligomeric CAV1 targeting to lysosomes for degradation. Ubiquitinated by ZNRF1; leading to degradation and modulation of the TLR4-mediated immune response.

Its subcellular location is the golgi apparatus membrane. The protein localises to the cell membrane. It localises to the membrane. The protein resides in the caveola. It is found in the membrane raft. Its subcellular location is the golgi apparatus. The protein localises to the trans-Golgi network. Functionally, may act as a scaffolding protein within caveolar membranes. Forms a stable heterooligomeric complex with CAV2 that targets to lipid rafts and drives caveolae formation. Mediates the recruitment of CAVIN proteins (CAVIN1/2/3/4) to the caveolae. Interacts directly with G-protein alpha subunits and can functionally regulate their activity. Involved in the costimulatory signal essential for T-cell receptor (TCR)-mediated T-cell activation. Its binding to DPP4 induces T-cell proliferation and NF-kappa-B activation in a T-cell receptor/CD3-dependent manner. Recruits CTNNB1 to caveolar membranes and may regulate CTNNB1-mediated signaling through the Wnt pathway. Negatively regulates TGFB1-mediated activation of SMAD2/3 by mediating the internalization of TGFBR1 from membrane rafts leading to its subsequent degradation. Binds 20(S)-hydroxycholesterol (20(S)-OHC). The protein is Caveolin-1 (CAV1) of Canis lupus familiaris (Dog).